The sequence spans 260 residues: Glutathione S-transferase domain-containing protein DDB_G0280881 (260 aa).

The 90-residue stretch at 7–96 folds into the GST N-terminal domain; that stretch reads KVDFIFYTNG…YLAQKYNTFL (90 aa). Residues 102-228 form the GST C-terminal domain; the sequence is NPKENSDVIT…QQISEGFKNF (127 aa).

It belongs to the GST superfamily.

This chain is Glutathione S-transferase domain-containing protein DDB_G0280881, found in Dictyostelium discoideum (Social amoeba).